A 220-amino-acid chain; its full sequence is CASP-like protein 4B1 (220 aa).

Residues 1-74 (MAMVTTEAAA…RWRREDMLDK (74 aa)) lie on the Cytoplasmic side of the membrane. The segment at 13–56 (TTAATAAAEKPQDVEKPDYAPYNGASTTADGGTGARARRGDGGG) is disordered. Residues 75–95 (SPLALHAAAAIFAFVALVLVA) traverse the membrane as a helical segment. At 96–109 (SNQHGDWMQFDRYQ) the chain is on the extracellular side. Residues 110–127 (EYRYLLAIASLALLYSLA) traverse the membrane as a helical segment. At 128 to 152 (QAARHAHRMRGGVDPVSSASARLLD) the chain is on the cytoplasmic side. The helical transmembrane segment at 153–173 (FVGDQVVAYLLMSALSAAVPI) threads the bilayer. Residues 174–188 (TNRMRSAVVNNFTDA) are Extracellular-facing. Asn-184 carries an N-linked (GlcNAc...) asparagine glycan. A helical membrane pass occupies residues 189–209 (TAAAISMAFFSFVALALSAVV). The Cytoplasmic portion of the chain corresponds to 210-220 (SGYKLSKQTYM).

This sequence belongs to the Casparian strip membrane proteins (CASP) family. As to quaternary structure, homodimer and heterodimers.

It localises to the cell membrane. The sequence is that of CASP-like protein 4B1 from Sorghum bicolor (Sorghum).